The chain runs to 577 residues: Isocitrate dehydrogenase kinase/phosphatase (577 aa).

ATP is bound by residues 318–324 (APGVRGM) and Lys-339. Asp-374 is an active-site residue.

Belongs to the AceK family.

It localises to the cytoplasm. The catalysed reaction is L-seryl-[isocitrate dehydrogenase] + ATP = O-phospho-L-seryl-[isocitrate dehydrogenase] + ADP + H(+). Functionally, bifunctional enzyme which can phosphorylate or dephosphorylate isocitrate dehydrogenase (IDH) on a specific serine residue. This is a regulatory mechanism which enables bacteria to bypass the Krebs cycle via the glyoxylate shunt in response to the source of carbon. When bacteria are grown on glucose, IDH is fully active and unphosphorylated, but when grown on acetate or ethanol, the activity of IDH declines drastically concomitant with its phosphorylation. This Pseudomonas aeruginosa (strain LESB58) protein is Isocitrate dehydrogenase kinase/phosphatase.